The chain runs to 439 residues: Serine/threonine-protein kinase 2 (439 aa).

Residues 87-439 (NDDFYHISTG…IFSDWINGGN (353 aa)) form the Protein kinase domain. Residues 93–101 (ISTGGYGIV) and K117 contribute to the ATP site. D307 functions as the Proton acceptor in the catalytic mechanism.

This sequence belongs to the protein kinase superfamily. Ser/Thr protein kinase family. Poxviruses subfamily. Post-translationally, phosphorylated in vivo. Autophosphorylated in vitro.

Its subcellular location is the host endoplasmic reticulum. It is found in the host endoplasmic reticulum-Golgi intermediate compartment. It carries out the reaction L-seryl-[protein] + ATP = O-phospho-L-seryl-[protein] + ADP + H(+). The enzyme catalyses L-threonyl-[protein] + ATP = O-phospho-L-threonyl-[protein] + ADP + H(+). Its function is as follows. Essential serine-protein kinase involved in the early stage of virion morphogenesis. The sequence is that of Serine/threonine-protein kinase 2 (OPG054) from Vaccinia virus (strain Copenhagen) (VACV).